The primary structure comprises 537 residues: Pentatricopeptide repeat-containing protein At1g02370, mitochondrial (537 aa).

A mitochondrion-targeting transit peptide spans Met-1–Cys-18. PPR repeat units lie at residues His-171–Asn-205, Asn-206–Pro-240, Cys-241–Lys-275, Thr-277–Lys-307, Asn-312–Val-346, Asn-347–Lys-377, and Asp-382–Pro-416.

It belongs to the PPR family. P subfamily.

The protein resides in the mitochondrion. The polypeptide is Pentatricopeptide repeat-containing protein At1g02370, mitochondrial (Arabidopsis thaliana (Mouse-ear cress)).